Consider the following 329-residue polypeptide: uncharacterized protein (329 aa).

Coiled coils occupy residues 57 to 120 (KKEE…QEVT) and 225 to 251 (QRQRQEEVQEVLQEAEKTHQATLGNMM).

This is an uncharacterized protein from Homo sapiens (Human).